The following is a 150-amino-acid chain: Photosystem II extrinsic protein V (150 aa).

A signal peptide spans 1–20 (MIRVIMLLVLVWMTPMISWA). Cysteine 50, cysteine 53, histidine 54, and histidine 105 together coordinate heme c.

It belongs to the cytochrome c family. PsbV subfamily. As to quaternary structure, PSII is composed of 1 copy each of membrane proteins PsbA, PsbB, PsbC, PsbD, PsbE, PsbF, PsbH, PsbI, PsbJ, PsbK, PsbL, PsbM, PsbT, PsbY, PsbZ, Psb30/Ycf12, at least 3 peripheral proteins of the oxygen-evolving complex and a large number of cofactors. It forms dimeric complexes. The extrinsic subunits in red algae are PsbO (OEC33), PsbQ', cytochrome c-550 and PsbU. Heme c serves as cofactor.

It is found in the plastid. The protein localises to the chloroplast thylakoid membrane. Functionally, one of the extrinsic, lumenal subunits of photosystem II (PSII). PSII is a light-driven water plastoquinone oxidoreductase, using light energy to abstract electrons from H(2)O, generating a proton gradient subsequently used for ATP formation. The extrinsic proteins stabilize the structure of photosystem II oxygen-evolving complex (OEC), the ion environment of oxygen evolution and protect the OEC against heat-induced inactivation. The protein is Photosystem II extrinsic protein V of Cyanidioschyzon merolae (strain NIES-3377 / 10D) (Unicellular red alga).